The sequence spans 907 residues: Anaphase-promoting complex subunit 2 (907 aa).

Disordered stretches follow at residues 203 to 228 and 790 to 838; these read NNSK…EEES and NKEK…AKEK. Composition is skewed to acidic residues over residues 214–226 and 804–830; these read QQEE…ENEE and ENDD…EEEE.

The protein belongs to the cullin family. As to quaternary structure, the APC/C is composed of at least 13 subunits that stay tightly associated throughout the cell cycle: anapc1, anapc2, anapc3, anapc4, anapc5, anapc6, anapc7, anapc8, anapc10, anapc11, cdc20, cdc26 and cdh1.

It localises to the nucleus. Its pathway is protein modification; protein ubiquitination. Component of the anaphase promoting complex/cyclosome (APC/C), a cell cycle-regulated E3 ubiquitin-protein ligase complex that controls progression through mitosis and the G1 phase of the cell cycle. This Dictyostelium discoideum (Social amoeba) protein is Anaphase-promoting complex subunit 2 (anapc2).